Reading from the N-terminus, the 486-residue chain is ATP synthase subunit beta (486 aa).

G164–T171 contributes to the ATP binding site.

The protein belongs to the ATPase alpha/beta chains family. As to quaternary structure, F-type ATPases have 2 components, CF(1) - the catalytic core - and CF(0) - the membrane proton channel. CF(1) has five subunits: alpha(3), beta(3), gamma(1), delta(1), epsilon(1). CF(0) has four main subunits: a(1), b(1), b'(1) and c(9-12).

The protein localises to the cellular thylakoid membrane. The enzyme catalyses ATP + H2O + 4 H(+)(in) = ADP + phosphate + 5 H(+)(out). In terms of biological role, produces ATP from ADP in the presence of a proton gradient across the membrane. The catalytic sites are hosted primarily by the beta subunits. The protein is ATP synthase subunit beta of Prochlorococcus marinus subsp. pastoris (strain CCMP1986 / NIES-2087 / MED4).